The sequence spans 694 residues: GRB2-associated-binding protein 1 (694 aa).

The residue at position 2 (Ser2) is an N-acetylserine. The PH domain occupies 5 to 116 (EVVCSGWLRK…WVRCICDICG (112 aa)). 2 disordered regions span residues 122–164 (EDPV…PYQL) and 194–231 (PEPT…SKHG). Residues 145–157 (APPSTQADSSSAT) show a composition bias toward polar residues. Over residues 194-203 (PEPTRTHADS) the composition is skewed to basic and acidic residues. Residues 204–231 (AKSTSSETDCNDNVPSHKNPASSQSKHG) are compositionally biased toward polar residues. Phosphoserine occurs at positions 251, 253, 266, and 304. Positions 323-386 (FPEGTLGQTS…TAGMSPSRSN (64 aa)) are disordered. Positions 362–386 (IPRTASDTDSSYCIPTAGMSPSRSN) are enriched in polar residues. Thr387 is modified (phosphothreonine). Phosphoserine occurs at positions 402 and 454. Disordered stretches follow at residues 493 to 532 (AHMG…VKPA) and 544 to 656 (ELQA…ADER). Phosphoserine is present on Ala547. Over residues 594-611 (PNLSSEDPNLFGSNSLDG) the composition is skewed to polar residues. Tyr627 carries the phosphotyrosine modification. Thr638 carries the phosphothreonine modification. Ser651 is subject to Phosphoserine. Residue Tyr659 is modified to Phosphotyrosine. Residues 671 to 694 (KSTREAWTDGRQSTESETPAKSVK) are disordered. Positions 672–684 (STREAWTDGRQST) are enriched in basic and acidic residues. Ser683 carries the phosphoserine modification. Positions 685–694 (ESETPAKSVK) are enriched in polar residues.

It belongs to the GAB family. In terms of assembly, identified in a complex containing FRS2, GRB2, GAB1, PIK3R1 and SOS1. Forms a tripartite complex containing GAB1, METTL13 and SPRY2. Within the complex interacts with METTL13. Interacts with GRB2 and with other SH2-containing proteins. Interacts with phosphorylated LAT2. Interacts with PTPRJ. Interacts (phosphorylated) with PTPN11. Interacts with HCK. Phosphorylated in response to FGFR1 activation. Phosphorylated on tyrosine residue(s) by the epidermal growth factor receptor (EGFR) and the insulin receptor (INSR). Tyrosine phosphorylation of GAB1 mediates interaction with several proteins that contain SH2 domains. Phosphorylated on tyrosine residues by HCK upon IL6 signaling.

Functionally, adapter protein that plays a role in intracellular signaling cascades triggered by activated receptor-type kinases. Plays a role in FGFR1 signaling. Probably involved in signaling by the epidermal growth factor receptor (EGFR) and the insulin receptor (INSR). Involved in the MET/HGF-signaling pathway. The protein is GRB2-associated-binding protein 1 (GAB1) of Homo sapiens (Human).